Here is a 172-residue protein sequence, read N- to C-terminus: Crossover junction endodeoxyribonuclease RuvC (172 aa).

Residues aspartate 7, glutamate 67, and aspartate 140 contribute to the active site. Mg(2+) is bound by residues aspartate 7, glutamate 67, and aspartate 140.

It belongs to the RuvC family. As to quaternary structure, homodimer which binds Holliday junction (HJ) DNA. The HJ becomes 2-fold symmetrical on binding to RuvC with unstacked arms; it has a different conformation from HJ DNA in complex with RuvA. In the full resolvosome a probable DNA-RuvA(4)-RuvB(12)-RuvC(2) complex forms which resolves the HJ. The cofactor is Mg(2+).

The protein resides in the cytoplasm. The enzyme catalyses Endonucleolytic cleavage at a junction such as a reciprocal single-stranded crossover between two homologous DNA duplexes (Holliday junction).. Functionally, the RuvA-RuvB-RuvC complex processes Holliday junction (HJ) DNA during genetic recombination and DNA repair. Endonuclease that resolves HJ intermediates. Cleaves cruciform DNA by making single-stranded nicks across the HJ at symmetrical positions within the homologous arms, yielding a 5'-phosphate and a 3'-hydroxyl group; requires a central core of homology in the junction. The consensus cleavage sequence is 5'-(A/T)TT(C/G)-3'. Cleavage occurs on the 3'-side of the TT dinucleotide at the point of strand exchange. HJ branch migration catalyzed by RuvA-RuvB allows RuvC to scan DNA until it finds its consensus sequence, where it cleaves and resolves the cruciform DNA. The protein is Crossover junction endodeoxyribonuclease RuvC of Syntrophomonas wolfei subsp. wolfei (strain DSM 2245B / Goettingen).